A 320-amino-acid polypeptide reads, in one-letter code: Lipoyl synthase (320 aa).

Positions 67, 72, 78, 93, 97, 100, and 307 each coordinate [4Fe-4S] cluster. Positions 79–296 (FNHGTATFMI…RDKAQAMGFE (218 aa)) constitute a Radical SAM core domain.

It belongs to the radical SAM superfamily. Lipoyl synthase family. Requires [4Fe-4S] cluster as cofactor.

Its subcellular location is the cytoplasm. It catalyses the reaction [[Fe-S] cluster scaffold protein carrying a second [4Fe-4S](2+) cluster] + N(6)-octanoyl-L-lysyl-[protein] + 2 oxidized [2Fe-2S]-[ferredoxin] + 2 S-adenosyl-L-methionine + 4 H(+) = [[Fe-S] cluster scaffold protein] + N(6)-[(R)-dihydrolipoyl]-L-lysyl-[protein] + 4 Fe(3+) + 2 hydrogen sulfide + 2 5'-deoxyadenosine + 2 L-methionine + 2 reduced [2Fe-2S]-[ferredoxin]. The protein operates within protein modification; protein lipoylation via endogenous pathway; protein N(6)-(lipoyl)lysine from octanoyl-[acyl-carrier-protein]: step 2/2. Its function is as follows. Catalyzes the radical-mediated insertion of two sulfur atoms into the C-6 and C-8 positions of the octanoyl moiety bound to the lipoyl domains of lipoate-dependent enzymes, thereby converting the octanoylated domains into lipoylated derivatives. In Pasteurella multocida (strain Pm70), this protein is Lipoyl synthase.